We begin with the raw amino-acid sequence, 467 residues long: MSSSYNTIALSSTPTFLLSSAAAGPGPNNFNRQEAAMTMVQQQPTSSVAPPPKKRRNQPGNPNPDAEVIALSPKTIMATNRFLCEVCNKGFQREQNLQLHRRGHNLPWKLKQKSNKEVRRKVYLCPEPSCVHHDPARALGDLTGIKKHYYRKHGEKKWKCDKCSKRYAVQSDWKAHSKTCGTKEYRCDCGTIFSRRDSYITHRAFCDALIQESARNPTVSFTAMAAGGGGGARHGFYGGASSALSHNHFGNNPNSGFTPLAAAGYNLNRSSSDKFEDFVPQATNPNPGPTNFLMQCSPNQGLLAQNNQSLMNHHGLISLGDNNNNNHNFFNLAYFQDTKNSDQTGVPSLFTNGADNNGPSALLRGLTSSSSSSVVVNDFGDCDHGNLQGLMNSLAATTDQQGRSPSLFDLHFANNLSMGGSDRLTLDFLGVNGGIVSTVNGRGGRSGGPPLDAEMKFSHPNHPYGKA.

Residues 1–20 (MSSSYNTIALSSTPTFLLSS) constitute a chloroplast transit peptide. The tract at residues 38–65 (TMVQQQPTSSVAPPPKKRRNQPGNPNPD) is disordered. Over residues 39-48 (MVQQQPTSSV) the composition is skewed to polar residues. Serine 72 is subject to Phosphoserine. 2 consecutive C2H2-type zinc fingers follow at residues 82–104 (FLCEVCNKGFQREQNLQLHRRGH) and 123–153 (YLCPEPSCVHHDPARALGDLTGIKKHYYRKH). The segment at 158-181 (WKCDKCSKRYAVQSDWKAHSKTCG) adopts a C2H2-type 2; degenerate zinc-finger fold. Positions 160, 163, 176, 180, 187, 189, 202, and 206 each coordinate Zn(2+). The CCHC-type 2; atypical zinc finger occupies 185–208 (YRCDCGTIFSRRDSYITHRAFCDA). The tract at residues 195-207 (RRDSYITHRAFCD) is SHR-binding. The disordered stretch occupies residues 440–467 (NGRGGRSGGPPLDAEMKFSHPNHPYGKA).

It localises to the plastid. It is found in the chloroplast. Functionally, probable transcription factor. This is Protein indeterminate-domain 6, chloroplastic from Arabidopsis thaliana (Mouse-ear cress).